Reading from the N-terminus, the 150-residue chain is UPF0260 protein CGSHiGG_00425 (150 aa).

The protein belongs to the UPF0260 family.

This chain is UPF0260 protein CGSHiGG_00425, found in Haemophilus influenzae (strain PittGG).